Consider the following 301-residue polypeptide: Ethylmalonyl-CoA decarboxylase (301 aa).

Lys211 carries the post-translational modification N6-acetyllysine; alternate. Lys211 bears the N6-succinyllysine; alternate mark. Lys295 is modified (N6-succinyllysine).

It belongs to the enoyl-CoA hydratase/isomerase family.

It is found in the cytoplasm. The protein localises to the cytosol. The catalysed reaction is (2S)-ethylmalonyl-CoA + H(+) = butanoyl-CoA + CO2. It carries out the reaction (S)-methylmalonyl-CoA + H(+) = propanoyl-CoA + CO2. It catalyses the reaction (2R)-ethylmalonyl-CoA + H(+) = butanoyl-CoA + CO2. Decarboxylates ethylmalonyl-CoA, a potentially toxic metabolite, to form butyryl-CoA, suggesting it might be involved in metabolite proofreading. Acts preferentially on (S)-ethylmalonyl-CoA but also has some activity on the (R)-isomer. Also has methylmalonyl-CoA decarboxylase activity at lower level. This chain is Ethylmalonyl-CoA decarboxylase (ECHDC1), found in Pongo abelii (Sumatran orangutan).